Consider the following 349-residue polypeptide: Isopentenyl-diphosphate delta-isomerase (349 aa).

Arg6–Lys7 contributes to the substrate binding site. FMN contacts are provided by residues Ala62 to Thr64, Ser93, and Asn122. A substrate-binding site is contributed by Gln152. Glu153 contacts Mg(2+). Residues Lys184, Thr214, Gly258–Gly259, and Ala280–Gly281 each bind FMN.

Belongs to the IPP isomerase type 2 family. As to quaternary structure, homooctamer. Dimer of tetramers. FMN is required as a cofactor. The cofactor is NADPH. Requires Mg(2+) as cofactor.

It is found in the cytoplasm. The catalysed reaction is isopentenyl diphosphate = dimethylallyl diphosphate. In terms of biological role, involved in the biosynthesis of isoprenoids. Catalyzes the 1,3-allylic rearrangement of the homoallylic substrate isopentenyl (IPP) to its allylic isomer, dimethylallyl diphosphate (DMAPP). In Bacillus thuringiensis subsp. konkukian (strain 97-27), this protein is Isopentenyl-diphosphate delta-isomerase.